The sequence spans 304 residues: Putative S-adenosyl-L-methionine-dependent methyltransferase MMAR_1057 (304 aa).

Residues aspartate 130 and 159–160 (DL) each bind S-adenosyl-L-methionine.

It belongs to the UPF0677 family.

Exhibits S-adenosyl-L-methionine-dependent methyltransferase activity. In Mycobacterium marinum (strain ATCC BAA-535 / M), this protein is Putative S-adenosyl-L-methionine-dependent methyltransferase MMAR_1057.